We begin with the raw amino-acid sequence, 166 residues long: Polyadenylate-binding protein 2 (166 aa).

One can recognise an RRM domain in the interval 55–132 (QSVYVGNVDY…RPLKVTPKRT (78 aa)). A disordered region spans residues 129 to 166 (PKRTNVPGMSRGRGRGRGRGRGRGRGGYRGRARGFAPY). Residues 140–160 (GRGRGRGRGRGRGRGGYRGRA) show a composition bias toward basic residues.

The protein localises to the nucleus. The protein is Polyadenylate-binding protein 2 (pab2) of Schizosaccharomyces pombe (strain 972 / ATCC 24843) (Fission yeast).